Here is a 462-residue protein sequence, read N- to C-terminus: Cytochrome P450 20A1 (462 aa).

The helical transmembrane segment at 4 to 24 threads the bilayer; that stretch reads FAIFAVTFLLALVGAVLYLYP. Cysteine 409 contacts heme.

It belongs to the cytochrome P450 family. Heme is required as a cofactor.

The protein localises to the membrane. This chain is Cytochrome P450 20A1 (CYP20A1), found in Bos taurus (Bovine).